Reading from the N-terminus, the 316-residue chain is MSTVQVPKLNTKDLLTLEELTQEEIISLIEFAIYLKNNKQEPLLQGKILGLIFDKHSTRTRVSFEAGMVQLGGHGMFLSGKEMQMGRGETVSDTAKVLSQYIDGIMIRTFSHADVEELAKESSIPVINGLTDDHHPCQALADLMTIYEEVNTFKGIKLAYVGDGNNVCHSLLLASAKVGMHMTVATPIGYEPNEEIVKKALAIAKETGAEIEILHNPELAVNEADFIYTDVWMSMGQEGEEEKYTLFQPYQINKELVKHAKQTYRFLHCLPAHREEEVTGEIIDGPQSIVFEQAGNRLHAQKALLVSLFKNVEEPS.

Carbamoyl phosphate-binding positions include 57 to 60, Gln84, Arg108, and 135 to 138; these read STRT and HPCQ. Residues Asn166, Asp230, and 234–235 each bind L-ornithine; that span reads SM. Carbamoyl phosphate is bound by residues 269-270 and Arg297; that span reads CL.

It belongs to the aspartate/ornithine carbamoyltransferase superfamily. OTCase family.

Its subcellular location is the cytoplasm. It carries out the reaction carbamoyl phosphate + L-ornithine = L-citrulline + phosphate + H(+). It participates in amino-acid biosynthesis; L-arginine biosynthesis; L-arginine from L-ornithine and carbamoyl phosphate: step 1/3. In terms of biological role, reversibly catalyzes the transfer of the carbamoyl group from carbamoyl phosphate (CP) to the N(epsilon) atom of ornithine (ORN) to produce L-citrulline. This is Ornithine carbamoyltransferase from Bacillus cereus (strain ZK / E33L).